The sequence spans 127 residues: Large ribosomal subunit protein bL17 (127 aa).

It belongs to the bacterial ribosomal protein bL17 family. As to quaternary structure, part of the 50S ribosomal subunit. Contacts protein L32.

The chain is Large ribosomal subunit protein bL17 from Lactobacillus helveticus (strain DPC 4571).